Reading from the N-terminus, the 155-residue chain is SsrA-binding protein (155 aa).

It belongs to the SmpB family.

The protein localises to the cytoplasm. Its function is as follows. Required for rescue of stalled ribosomes mediated by trans-translation. Binds to transfer-messenger RNA (tmRNA), required for stable association of tmRNA with ribosomes. tmRNA and SmpB together mimic tRNA shape, replacing the anticodon stem-loop with SmpB. tmRNA is encoded by the ssrA gene; the 2 termini fold to resemble tRNA(Ala) and it encodes a 'tag peptide', a short internal open reading frame. During trans-translation Ala-aminoacylated tmRNA acts like a tRNA, entering the A-site of stalled ribosomes, displacing the stalled mRNA. The ribosome then switches to translate the ORF on the tmRNA; the nascent peptide is terminated with the 'tag peptide' encoded by the tmRNA and targeted for degradation. The ribosome is freed to recommence translation, which seems to be the essential function of trans-translation. The protein is SsrA-binding protein of Gloeothece citriformis (strain PCC 7424) (Cyanothece sp. (strain PCC 7424)).